The chain runs to 323 residues: Thioredoxin reductase (323 aa).

42 to 49 (YRAEADGA) lines the FAD pocket. A disulfide bond links cysteine 143 and cysteine 146. 286-295 (DVLCNEVKQA) lines the FAD pocket.

Belongs to the class-II pyridine nucleotide-disulfide oxidoreductase family. As to quaternary structure, homodimer. FAD is required as a cofactor.

Its subcellular location is the cytoplasm. The catalysed reaction is [thioredoxin]-dithiol + NADP(+) = [thioredoxin]-disulfide + NADPH + H(+). This is Thioredoxin reductase (trxB) from Aquifex aeolicus (strain VF5).